Here is a 246-residue protein sequence, read N- to C-terminus: FAD synthetase (246 aa).

This sequence belongs to the RibF family.

It carries out the reaction FMN + ATP + H(+) = FAD + diphosphate. It functions in the pathway cofactor biosynthesis; FAD biosynthesis; FAD from FMN: step 1/1. Its function is as follows. Catalyzes the adenylation of flavin mononucleotide (FMN) to form flavin adenine dinucleotide (FAD) coenzyme. Can also catalyze, with lower efficiency, the adenylation of the toxic riboflavin analogs 8-demethyl-8-aminoriboflavin mononucleotide (AFMN) and roseoflavin mononucleotide (RoFMN) to 8-demethyl-8-aminoriboflavin adenine dinucleotide (AFAD) and roseoflavin adenine dinucleotide (RoFAD), respectively. This is FAD synthetase from Listeria monocytogenes serovar 1/2a (strain ATCC BAA-679 / EGD-e).